Here is a 357-residue protein sequence, read N- to C-terminus: Heat-inducible transcription repressor HrcA (357 aa).

It belongs to the HrcA family.

Negative regulator of class I heat shock genes (grpE-dnaK-dnaJ and groELS operons). Prevents heat-shock induction of these operons. This chain is Heat-inducible transcription repressor HrcA, found in Chlorobium limicola (strain DSM 245 / NBRC 103803 / 6330).